A 317-amino-acid chain; its full sequence is Malate dehydrogenase (317 aa).

Residues 7-13 (GAAGGIG) and aspartate 34 each bind NAD(+). 2 residues coordinate substrate: arginine 81 and arginine 87. NAD(+) contacts are provided by residues asparagine 94 and 117–119 (VTN). 2 residues coordinate substrate: asparagine 119 and arginine 153. The Proton acceptor role is filled by histidine 177. Methionine 231 lines the NAD(+) pocket.

Belongs to the LDH/MDH superfamily. MDH type 1 family. As to quaternary structure, homodimer.

It catalyses the reaction (S)-malate + NAD(+) = oxaloacetate + NADH + H(+). In terms of biological role, catalyzes the reversible oxidation of malate to oxaloacetate. In Actinobacillus pleuropneumoniae serotype 7 (strain AP76), this protein is Malate dehydrogenase.